A 170-amino-acid polypeptide reads, in one-letter code: Peptide deformylase (170 aa).

Fe cation contacts are provided by Cys91 and His133. Residue Glu134 is part of the active site. His137 is a binding site for Fe cation.

This sequence belongs to the polypeptide deformylase family. Fe(2+) serves as cofactor.

It carries out the reaction N-terminal N-formyl-L-methionyl-[peptide] + H2O = N-terminal L-methionyl-[peptide] + formate. Functionally, removes the formyl group from the N-terminal Met of newly synthesized proteins. Requires at least a dipeptide for an efficient rate of reaction. N-terminal L-methionine is a prerequisite for activity but the enzyme has broad specificity at other positions. This is Peptide deformylase from Histophilus somni (strain 2336) (Haemophilus somnus).